Here is a 239-residue protein sequence, read N- to C-terminus: Ribonuclease HII (239 aa).

An RNase H type-2 domain is found at 30–221 (GPVAGVDEVG…VRRLVTAGTP (192 aa)). Positions 36, 37, and 130 each coordinate a divalent metal cation.

The protein belongs to the RNase HII family. Requires Mn(2+) as cofactor. Mg(2+) is required as a cofactor.

It is found in the cytoplasm. It catalyses the reaction Endonucleolytic cleavage to 5'-phosphomonoester.. Its function is as follows. Endonuclease that specifically degrades the RNA of RNA-DNA hybrids. The protein is Ribonuclease HII of Mycobacterium sp. (strain KMS).